Reading from the N-terminus, the 965-residue chain is MTALIRIRGARTHNLKNLDLDLPRNTLIVITGLSGSGKSSLAFDTIYAEGQRRYVESLSAYARQFLSVMEKPDVDHIEGLSPAISIEQKSTSHNPRSTVGTITEIYDYLRLLYARVGQPRCPEHHYPLEAQTVSQMVDHVLTLDPEQRYMLLAPVVRERKGEHTQVFEQLRAQGFVRVRVDGELYEIDAVPTLTLRQKHTIEAVIDRFRPREDIKQRLAESFETALKLGNGMASVQTLDTTTATPHLFSSKYSCPVCDYSLPELEPRLFSFNAPMGACPACNGLGVTEFFDPAKVVIHPDLSLSAGAVRGWDRRNAYYFQLIASLAKHYTFDIDASWESLPEEIRHTILFGSGDEQINFTYLTEAGGRTKRKHRFEGIVPNLERRYRETESAAVREELAKYVSTRTCPECGGTRLNRAARNVFVADRTLPELTVLPINDALEFFKTLRLSGWRGEIAIKIVKEIGERLGFLVDVGLDYLTLERKADTLSGGEAQRIRLASQIGAGLVGVMYVLDEPSIGLHQRDNERLLGTLTRLRDLGNTVIVVEHDEDAIRQADHILDIGPGAGVHGGEICAQGSLEQIMAAPRSLTGQYLSGRRRIEIPKQRHPPNATKMLHLRGACGNNLKGVNLDIPEGLFTCITGVSGSGKSTLINDTLFTLAANEINGASHPIAPYASVDGLELFDKVVDIDQSPIGRTPRSNPATYTGMFTPLRELFAQVPEARARGYSPGRFSFNVRGGRCEACEGDGLIKVEMHFLPDVYVPCDICHGKRYNRETLEIRYKGYNINDVLEMTVEDALKLFEAVPAIARKLETLVDVGLSYLKLGQSATTLSGGEAQRVKLSKELSRRDTGHTLYILDEPTTGLHFYDIEALLAVMHKLRDAGNTVIVIEHNLDVIKTADWVIDLGPEGGGRGGEILVAGTPETVAAHPHSHTGHFLAKLLPPKDVSNCGHRNPKEEVDIAKTVHR.

32-39 (GLSGSGKS) provides a ligand contact to ATP. Residues 254 to 281 (CPVCDYSLPELEPRLFSFNAPMGACPAC) form a C4-type zinc finger. 2 consecutive ABC transporter domains span residues 311–588 (WDRR…PRSL) and 608–937 (PNAT…HFLA). 641-648 (GVSGSGKS) is a binding site for ATP. The segment at 740-766 (CEACEGDGLIKVEMHFLPDVYVPCDIC) adopts a C4-type zinc-finger fold.

Belongs to the ABC transporter superfamily. UvrA family. Forms a heterotetramer with UvrB during the search for lesions.

The protein resides in the cytoplasm. In terms of biological role, the UvrABC repair system catalyzes the recognition and processing of DNA lesions. UvrA is an ATPase and a DNA-binding protein. A damage recognition complex composed of 2 UvrA and 2 UvrB subunits scans DNA for abnormalities. When the presence of a lesion has been verified by UvrB, the UvrA molecules dissociate. In Xylella fastidiosa (strain Temecula1 / ATCC 700964), this protein is UvrABC system protein A.